We begin with the raw amino-acid sequence, 330 residues long: Inorganic pyrophosphatase 2, mitochondrial (330 aa).

The N-terminal 27 residues, 1-27, are a transit peptide targeting the mitochondrion; that stretch reads MRALLPLLSVGRGWRVGAAARPPRRVM. Positions 159, 164, and 196 each coordinate Mg(2+). The residue at position 211 (Lys-211) is an N6-succinyllysine. Lys-219 is modified (N6-acetyllysine). Lys-254 is modified (N6-succinyllysine). Lys-256 carries the N6-acetyllysine modification.

This sequence belongs to the PPase family. Homodimer. Mg(2+) is required as a cofactor.

It is found in the mitochondrion. It catalyses the reaction diphosphate + H2O = 2 phosphate + H(+). Functionally, hydrolyzes inorganic pyrophosphate. This activity is essential for correct regulation of mitochondrial membrane potential, and mitochondrial organization and function. This Mus musculus (Mouse) protein is Inorganic pyrophosphatase 2, mitochondrial (Ppa2).